A 150-amino-acid chain; its full sequence is SsrA-binding protein (150 aa).

Belongs to the SmpB family.

It localises to the cytoplasm. Its function is as follows. Required for rescue of stalled ribosomes mediated by trans-translation. Binds to transfer-messenger RNA (tmRNA), required for stable association of tmRNA with ribosomes. tmRNA and SmpB together mimic tRNA shape, replacing the anticodon stem-loop with SmpB. tmRNA is encoded by the ssrA gene; the 2 termini fold to resemble tRNA(Ala) and it encodes a 'tag peptide', a short internal open reading frame. During trans-translation Ala-aminoacylated tmRNA acts like a tRNA, entering the A-site of stalled ribosomes, displacing the stalled mRNA. The ribosome then switches to translate the ORF on the tmRNA; the nascent peptide is terminated with the 'tag peptide' encoded by the tmRNA and targeted for degradation. The ribosome is freed to recommence translation, which seems to be the essential function of trans-translation. The polypeptide is SsrA-binding protein (Nitratiruptor sp. (strain SB155-2)).